Consider the following 462-residue polypeptide: Integrator complex subunit 12 (462 aa).

Positions 42–132 are disordered; the sequence is GIDSSYRPSQ…PETQSSPITV (91 aa). Residues 59-86 show a composition bias toward polar residues; that stretch reads ISSTKNISIKQEPKISSSLPSGNNNGKV. Residue K68 forms a Glycyl lysine isopeptide (Lys-Gly) (interchain with G-Cter in SUMO2) linkage. The segment covering 88–124 has biased composition (basic and acidic residues); it reads TTEKVKKEAEKRPADKMKSDITEGVDIPKKPRLEKPE. A Phosphoserine modification is found at S128. The segment at 159 to 215 adopts a PHD-type zinc-finger fold; that stretch reads GLACVVCRQMMVASGNQLVECQECHNLYHRDCHKPQVTDKEANDPRLVWYCARCTRQ. Residue K254 forms a Glycyl lysine isopeptide (Lys-Gly) (interchain with G-Cter in SUMO2) linkage. Over residues 301–328 the composition is skewed to polar residues; the sequence is SSAGPSTAKLSSTTQNNTGKPATSSANQ. Positions 301 to 462 are disordered; sequence SSAGPSTAKL…KKAAQKKLKK (162 aa). 2 stretches are compositionally biased toward low complexity: residues 347–358 and 382–437; these read KIGSNNSTTPTV and VSKV…GPTS. Residues 449–462 are compositionally biased toward basic residues; the sequence is QMVKKKAAQKKLKK.

The protein belongs to the Integrator subunit 12 family. In terms of assembly, component of the Integrator complex, composed of core subunits INTS1, INTS2, INTS3, INTS4, INTS5, INTS6, INTS7, INTS8, INTS9/RC74, INTS10, INTS11/CPSF3L, INTS12, INTS13, INTS14 and INTS15. The core complex associates with protein phosphatase 2A subunits PPP2CA and PPP2R1A, to form the Integrator-PP2A (INTAC) complex. Post-translationally, dephosphorylated at Ser-128 by the PNUTS-PP1 complex, promoting RNA polymerase II transcription pause-release.

It localises to the nucleus. In terms of biological role, component of the integrator complex, a multiprotein complex that terminates RNA polymerase II (Pol II) transcription in the promoter-proximal region of genes. The integrator complex provides a quality checkpoint during transcription elongation by driving premature transcription termination of transcripts that are unfavorably configured for transcriptional elongation: the complex terminates transcription by (1) catalyzing dephosphorylation of the C-terminal domain (CTD) of Pol II subunit POLR2A/RPB1 and SUPT5H/SPT5, (2) degrading the exiting nascent RNA transcript via endonuclease activity and (3) promoting the release of Pol II from bound DNA. The integrator complex is also involved in terminating the synthesis of non-coding Pol II transcripts, such as enhancer RNAs (eRNAs), small nuclear RNAs (snRNAs), telomerase RNAs and long non-coding RNAs (lncRNAs). Mediates recruitment of cytoplasmic dynein to the nuclear envelope, probably as component of the integrator complex. This is Integrator complex subunit 12 (INTS12) from Pongo abelii (Sumatran orangutan).